Consider the following 99-residue polypeptide: Protein 7.3 (99 aa).

The interval 59 to 99 (VPEKEVSTEDEAQTESGRKKARAGGKKSLSVARSSGGGINI) is disordered.

It belongs to the T7likevirus protein 7.3 family.

It is found in the virion. In terms of biological role, plays an essential role most probably in virion tail assembly. May form a scaffold around which gp11 and gp12 polymerize. Gets ejected from the infecting particle into the bacterial cell. The chain is Protein 7.3 from Escherichia phage T7 (Bacteriophage T7).